A 276-amino-acid polypeptide reads, in one-letter code: Membrane protein insertase YidC 2 (276 aa).

The N-terminal stretch at 1–22 (MGVKKKLKLTSLLGLSLLIMTA) is a signal peptide. Cys-23 carries N-palmitoyl cysteine lipidation. Cys-23 carries S-diacylglycerol cysteine lipidation. The next 4 membrane-spanning stretches (helical) occupy residues 58 to 78 (ISIGVGIILFTVLIRTVLLPV), 130 to 150 (SDSLWPILIQMPVILALFQAL), 169 to 189 (VDTTLVLPILAAVFTFLSTWL), and 207 to 227 (GIPVLIFIFAVYAPGGVALYW).

This sequence belongs to the OXA1/ALB3/YidC family. Type 2 subfamily. In terms of assembly, interacts with KhpB (also called EloR/Jag).

It is found in the cell membrane. Its function is as follows. Required for the insertion and/or proper folding and/or complex formation of integral membrane proteins into the membrane. Involved in integration of membrane proteins that insert both dependently and independently of the Sec translocase complex, as well as at least some lipoproteins. This is Membrane protein insertase YidC 2 from Streptococcus pneumoniae (strain ATCC BAA-255 / R6).